The sequence spans 149 residues: Large ribosomal subunit protein eL24A (149 aa).

Composition is skewed to basic and acidic residues over residues Lys93–Ala102 and Lys116–Ala125. The interval Lys93–His149 is disordered.

This sequence belongs to the eukaryotic ribosomal protein eL24 family. In terms of assembly, component of the large ribosomal subunit (LSU). Mature yeast ribosomes consist of a small (40S) and a large (60S) subunit. The 40S small subunit contains 1 molecule of ribosomal RNA (18S rRNA) and at least 33 different proteins. The large 60S subunit contains 3 rRNA molecules (25S, 5.8S and 5S rRNA) and at least 46 different proteins.

The protein localises to the cytoplasm. Functionally, component of the ribosome, a large ribonucleoprotein complex responsible for the synthesis of proteins in the cell. The small ribosomal subunit (SSU) binds messenger RNAs (mRNAs) and translates the encoded message by selecting cognate aminoacyl-transfer RNA (tRNA) molecules. The large subunit (LSU) contains the ribosomal catalytic site termed the peptidyl transferase center (PTC), which catalyzes the formation of peptide bonds, thereby polymerizing the amino acids delivered by tRNAs into a polypeptide chain. The nascent polypeptides leave the ribosome through a tunnel in the LSU and interact with protein factors that function in enzymatic processing, targeting, and the membrane insertion of nascent chains at the exit of the ribosomal tunnel. The chain is Large ribosomal subunit protein eL24A (rpl2401) from Schizosaccharomyces pombe (strain 972 / ATCC 24843) (Fission yeast).